The sequence spans 1403 residues: DNA-directed RNA polymerase subunit beta' (1403 aa).

Zn(2+)-binding residues include Cys70, Cys72, Cys85, and Cys88. Positions 461, 463, and 465 each coordinate Mg(2+). Zn(2+)-binding residues include Cys816, Cys890, Cys897, and Cys900.

It belongs to the RNA polymerase beta' chain family. As to quaternary structure, the RNAP catalytic core consists of 2 alpha, 1 beta, 1 beta' and 1 omega subunit. When a sigma factor is associated with the core the holoenzyme is formed, which can initiate transcription. Mg(2+) serves as cofactor. The cofactor is Zn(2+).

It carries out the reaction RNA(n) + a ribonucleoside 5'-triphosphate = RNA(n+1) + diphosphate. Its function is as follows. DNA-dependent RNA polymerase catalyzes the transcription of DNA into RNA using the four ribonucleoside triphosphates as substrates. This Dechloromonas aromatica (strain RCB) protein is DNA-directed RNA polymerase subunit beta'.